Consider the following 253-residue polypeptide: PAXIP1-associated glutamate-rich protein 1 (253 aa).

Disordered regions lie at residues 1–109 (MSLV…MPPP) and 128–253 (QAEI…QRKY). The span at 51–62 (EGGREEAEHEGS) shows a compositional bias: basic and acidic residues. The interval 116–160 (YELLAAHGTLELQAEILPRRPPTPEAQSEEERSDEEPEAKEEEEE) is sufficient for interaction with NCOA1. Phosphothreonine is present on threonine 138. Over residues 142-159 (QSEEERSDEEPEAKEEEE) the composition is skewed to acidic residues. 2 positions are modified to phosphoserine: serine 143 and serine 148. A sufficient for interaction with ESR1 region spans residues 161 to 253 (KPHMPTEFDF…GSLFPRQRKY (93 aa)). The segment covering 195–223 (QKREARLDKVLSDMKRHKKLEEQILRTGR) has biased composition (basic and acidic residues). At serine 237 the chain carries Phosphoserine.

Component of the KMT2 family MLL2/MLL3 complex, at least composed of the histone methyltransferases KMT2D and/or KMT2C, the common complex subunits ASH2L, RBBP5, WDR5 and DPY30, and the complex type-specific subunits PAXIP1/PTIP, PAGR1, NCOA6 and KDM6A; PAXIP1 is required for the association with the MLL2/MLL3 complex. Forms a constitutive complex with PAXIP1/PTIP independently of the MLL2/MLL3 complex. Interacts with NCOA1, ESR1, NR3C1, AR.

It is found in the nucleus. Its association with the histone methyltransferase MLL2/MLL3 complex is suggesting a role in epigenetic transcriptional activation. However, in association with PAXIP1/PTIP is proposed to function at least in part independently of the MLL2/MLL3 complex. Proposed to be recruited by PAXIP1 to sites of DNA damage where the PAGR1:PAXIP1 complex is required for cell survival in response to DNA damage independently of the MLL2/MLL3 complex. However, its function in DNA damage has been questioned. During immunoglobulin class switching in activated B-cells is involved in transcription regulation of downstream switch regions at the immunoglobulin heavy-chain (Igh) locus independently of the MLL2/MLL3 complex. Involved in both estrogen receptor-regulated gene transcription and estrogen-stimulated G1/S cell-cycle transition. Acts as a transcriptional cofactor for nuclear hormone receptors. Inhibits the induction properties of several steroid receptors such as NR3C1, AR and PPARG; the mechanism of inhibition appears to be gene-dependent. This is PAXIP1-associated glutamate-rich protein 1 (PAGR1) from Bos taurus (Bovine).